The primary structure comprises 75 residues: uncharacterized protein (75 aa).

Positions 1 to 21 (MRLIVVSIMVTLLSGCGSIIS) are cleaved as a signal peptide.

To E.coli YidQ.

This is an uncharacterized protein from Escherichia coli O157:H7.